Reading from the N-terminus, the 306-residue chain is Pre-mRNA-splicing factor cwf26 (306 aa).

The interval K130–S152 is disordered. A coiled-coil region spans residues K130–V198.

This sequence belongs to the CWC26 family. In terms of assembly, belongs to the 40S cdc5-associated complex (or cwf complex), a spliceosome sub-complex reminiscent of a late-stage spliceosome composed of the U2, U5 and U6 snRNAs and at least brr2, cdc5, cwf2/prp3, cwf3/syf1, cwf4/syf3, cwf5/ecm2, spp42/cwf6, cwf7/spf27, cwf8, cwf9, cwf10, cwf11, cwf12, prp45/cwf13, cwf14, cwf15, cwf16, cwf17, cwf18, cwf19, cwf20, cwf21, cwf22, cwf23, cwf24, cwf25, cwf26, cyp7/cwf27, cwf28, cwf29/ist3, lea1, msl1, prp5/cwf1, prp10, prp12/sap130, prp17, prp22, sap61, sap62, sap114, sap145, slu7, smb1, smd1, smd3, smf1, smg1 and syf2.

It is found in the cytoplasm. The protein localises to the nucleus. In terms of biological role, involved in mRNA splicing. This is Pre-mRNA-splicing factor cwf26 (cwf26) from Schizosaccharomyces pombe (strain 972 / ATCC 24843) (Fission yeast).